A 412-amino-acid polypeptide reads, in one-letter code: MAFPPVDEQMTVLRRGAEEIVPEDELAEKLRTSRETDTPLTVKLGCDPSRPDLHLGHTVVLRKLRQFQDFGHRAVLIVGDFTGMIGDPSGRSKTRPQLTLEETREHGQSYYEQATRVLDPNKTEIRYNSEWLDEMRFSDVIELAAQQTVAQMLKRDDFNERYEAGQPISLHEFLYPLAQARDSVHIEADVELGGTDQRFNLLLARRLQEANDQAAQVCMMLPLLEGTDGSDKMSKSLDNAIGIAEAPEDMYGKTMSVPDDLIYRYVELVTDIPTEQLPKVKQFAESNPRAAKAQLARRIVEMYHGEEAADRAEEHFEQTVVEGGVPDDLPEYTPTPEDGAEVGLLNLMRHADLTDSNSEGRRMIEQGAVTIDEEKVTDTGRYIDVAEEAPFVLQVGKRRFARIRPPENGTDV.

The 'HIGH' region signature appears at 48-57; sequence PSRPDLHLGH. The 'KMSKS' region signature appears at 232-236; it reads KMSKS. Lys-235 is a binding site for ATP. An S4 RNA-binding domain is found at 342–405; that stretch reads VGLLNLMRHA…GKRRFARIRP (64 aa).

The protein belongs to the class-I aminoacyl-tRNA synthetase family. TyrS type 2 subfamily. Homodimer.

It is found in the cytoplasm. It catalyses the reaction tRNA(Tyr) + L-tyrosine + ATP = L-tyrosyl-tRNA(Tyr) + AMP + diphosphate + H(+). Its function is as follows. Catalyzes the attachment of tyrosine to tRNA(Tyr) in a two-step reaction: tyrosine is first activated by ATP to form Tyr-AMP and then transferred to the acceptor end of tRNA(Tyr). The chain is Tyrosine--tRNA ligase from Salinibacter ruber (strain DSM 13855 / M31).